We begin with the raw amino-acid sequence, 1174 residues long: Tight junction protein 2 (1174 aa).

A PDZ 1 domain is found at 10 to 97 (TVTLQKDSKR…IAAIVVKRPR (88 aa)). 10 positions are modified to phosphoserine: Ser-107, Ser-127, Ser-130, Ser-140, Ser-145, Ser-147, Ser-151, Ser-173, Ser-195, and Ser-217. Over residues 125–137 (GRSARSGYSERSR) the composition is skewed to basic and acidic residues. The disordered stretch occupies residues 125–290 (GRSARSGYSE…AGQPDSDRPI (166 aa)). Residues 146 to 214 (RSWEDSPERG…DYGRPGERSH (69 aa)) show a composition bias toward basic and acidic residues. Over residues 220-235 (RGYDRGYDRGYDRGYD) the composition is skewed to basic and acidic residues. Residue Ser-239 is modified to Phosphoserine. Basic and acidic residues-rich tracts occupy residues 243 to 266 (EYGRRTQPDARHAGSRSRSREHLR) and 274 to 288 (LRGRPDHAGQPDSDR). The PDZ 2 domain maps to 291-369 (GVLLMKSKAN…KLQLVVLRDS (79 aa)). Residues Ser-309, Ser-382, Ser-384, Ser-390, Ser-399, Ser-408, Ser-414, and Ser-415 each carry the phosphoserine modification. The segment at 391–430 (EIESNRSFSPEERRQQYSDYDYHSSNEKLKERPNSREDMQ) is disordered. A compositionally biased stretch (basic and acidic residues) spans 399 to 430 (SPEERRQQYSDYDYHSSNEKLKERPNSREDMQ). Thr-439 is modified (phosphothreonine). A disordered region spans residues 456 to 490 (ENSKEPRYQEEPPAPQPKAAPRTFLRPSPEDEAIY). Ser-483 carries the phosphoserine modification. The PDZ 3 domain maps to 493–574 (NTKMVRFKKG…GEMVTILAQS (82 aa)). Phosphotyrosine is present on Tyr-558. Residues 588 to 653 (GDSFFIRSHF…PNKSRAEQMA (66 aa)) enclose the SH3 domain. The region spanning 679–860 (MKKNLRKSRE…WFGSLKDTIQ (182 aa)) is the Guanylate kinase-like domain. Residues Ser-686 and Ser-886 each carry the phosphoserine modification. Thr-889 carries the phosphothreonine modification. 2 positions are modified to phosphoserine: Ser-897 and Ser-904. Disordered stretches follow at residues 904–1065 (SDFE…VLGK) and 1100–1174 (DIYA…DTEL). Phosphothreonine is present on residues Thr-909 and Thr-917. The segment covering 940-951 (VQHEESIRKPSP) has biased composition (basic and acidic residues). Phosphoserine is present on residues Ser-950, Ser-962, Ser-970, Ser-990, and Ser-1052. Over residues 978–1000 (EPPKAKTQNREESFDISRSHDYK) the composition is skewed to basic and acidic residues. Residues 1044-1056 (ESEEVGEGSEEQE) show a composition bias toward acidic residues. Position 1102 is a phosphotyrosine (Tyr-1102). Phosphoserine is present on residues Ser-1131 and Ser-1143. Positions 1150 to 1159 (YRQQLSEHSK) are enriched in basic and acidic residues. The segment at 1172–1174 (TEL) is interaction with SCRIB.

This sequence belongs to the MAGUK family. In terms of assembly, homodimer. Interacts (via PDZ2 domain) with TJP1/ZO1 (via PDZ2 domain). Interacts with UBN1. Interacts with SCRIB. Interacts with OCLN. Interacts with SAFB in the nucleus. Interacts with USP53 (via the C-terminal region). Interacts with claudins, including CLDN1, CLDN2, CLDN3, CLDN5 and CLDN7. Interacts with CLDN18. Interacts (via N-terminus) with CTNNA1. Phosphorylated.

It is found in the cell junction. It localises to the adherens junction. Its subcellular location is the cell membrane. The protein localises to the nucleus. The protein resides in the tight junction. In terms of biological role, plays a role in tight junctions and adherens junctions. Acts as a positive regulator of RANKL-induced osteoclast differentiation, potentially via mediating downstream transcriptional activity. The sequence is that of Tight junction protein 2 from Canis lupus familiaris (Dog).